Here is a 229-residue protein sequence, read N- to C-terminus: 2-C-methyl-D-erythritol 4-phosphate cytidylyltransferase (229 aa).

It belongs to the IspD/TarI cytidylyltransferase family. IspD subfamily.

The enzyme catalyses 2-C-methyl-D-erythritol 4-phosphate + CTP + H(+) = 4-CDP-2-C-methyl-D-erythritol + diphosphate. It participates in isoprenoid biosynthesis; isopentenyl diphosphate biosynthesis via DXP pathway; isopentenyl diphosphate from 1-deoxy-D-xylulose 5-phosphate: step 2/6. In terms of biological role, catalyzes the formation of 4-diphosphocytidyl-2-C-methyl-D-erythritol from CTP and 2-C-methyl-D-erythritol 4-phosphate (MEP). The polypeptide is 2-C-methyl-D-erythritol 4-phosphate cytidylyltransferase (Clostridium botulinum (strain Langeland / NCTC 10281 / Type F)).